Here is a 308-residue protein sequence, read N- to C-terminus: Ornithine carbamoyltransferase (308 aa).

Residues 56-59 (STRT), Gln-83, Arg-107, and 134-137 (HPCQ) each bind carbamoyl phosphate. Residues Asn-165, Asp-225, and 229–230 (SM) contribute to the L-ornithine site. Carbamoyl phosphate-binding positions include 266–267 (CL) and Arg-294.

Belongs to the aspartate/ornithine carbamoyltransferase superfamily. OTCase family.

The protein localises to the cytoplasm. The enzyme catalyses carbamoyl phosphate + L-ornithine = L-citrulline + phosphate + H(+). It participates in amino-acid biosynthesis; L-arginine biosynthesis; L-arginine from L-ornithine and carbamoyl phosphate: step 1/3. Reversibly catalyzes the transfer of the carbamoyl group from carbamoyl phosphate (CP) to the N(epsilon) atom of ornithine (ORN) to produce L-citrulline. The polypeptide is Ornithine carbamoyltransferase (Roseobacter denitrificans (strain ATCC 33942 / OCh 114) (Erythrobacter sp. (strain OCh 114))).